The primary structure comprises 177 residues: Large ribosomal subunit protein uL6 (177 aa).

It belongs to the universal ribosomal protein uL6 family. In terms of assembly, part of the 50S ribosomal subunit.

This protein binds to the 23S rRNA, and is important in its secondary structure. It is located near the subunit interface in the base of the L7/L12 stalk, and near the tRNA binding site of the peptidyltransferase center. The protein is Large ribosomal subunit protein uL6 of Photobacterium profundum (strain SS9).